The chain runs to 201 residues: Recombination protein RecR (201 aa).

A C4-type zinc finger spans residues 60 to 75; the sequence is CKVCGNIDTQNPCTVC. Positions 83–178 constitute a Toprim domain; it reads SIIVVVADVA…KVTRLAHGVP (96 aa).

It belongs to the RecR family.

May play a role in DNA repair. It seems to be involved in an RecBC-independent recombinational process of DNA repair. It may act with RecF and RecO. This chain is Recombination protein RecR, found in Rhodopseudomonas palustris (strain BisB18).